The following is a 227-amino-acid chain: Cleavage and polyadenylation specificity factor subunit 5 (227 aa).

An N-acetylserine modification is found at Ser-2. The tract at residues 2–147 is necessary for RNA-binding; it reads SVVPPNRSQT…DWVIDDCIGN (146 aa). The residue at position 15 (Arg-15) is an Omega-N-methylarginine. N6-acetyllysine occurs at positions 23 and 29. A Phosphotyrosine modification is found at Tyr-40. Lys-56 is subject to N6-acetyllysine. The 126-residue stretch at 76–201 folds into the Nudix hydrolase domain; it reads MRRTVEGVLI…KLVAAPLFEL (126 aa). Positions 81–160 are necessary for interactions with PAPOLA and PABPN1; it reads EGVLIVHEHR…PNFEPPQYPY (80 aa). Residues 102-104 are interaction with RNA; that stretch reads TFF. The Nudix box signature appears at 109-130; the sequence is GELNPGEDEVEGLKRLMTEILG.

The protein belongs to the Nudix hydrolase family. CPSF5 subfamily. As to quaternary structure, homodimer (via N- and C-terminus); binds RNA as homodimer. Component of the cleavage factor Im (CFIm) complex which is a heterotetramer composed of two subunits of NUDT21/CPSF5 and two subunits of CPSF6 or CPSF7 or a heterodimer of CPSF6 and CPSF7. The cleavage factor Im (CFIm) complex associates with the CPSF and CSTF complexes to promote the assembly of the core mRNA 3'-processing machinery. Interacts with CPSF6 (via the RRM domain); this interaction is direct and enhances binding to RNA. Interacts with CPSF7. Interacts with FIP1L1; this interaction occurs in a RNA sequence-specific manner. Interacts with PABPN1. Interacts (via N-terminus) with PAPOLA (via C-terminus); this interaction is direct and diminished by acetylation. Interacts with SNRNP70. Interacts with VIRMA. Acetylated mainly by p300/CBP, recruited to the complex by CPSF6. Acetylation decreases interaction with PAPAO. Deacetylated by the class I/II HDACs, HDAC1, HDAC3 and HDAC10, and by the class III HDACs, SIRT1 and SIRT2. In terms of tissue distribution, expressed in testis. Expressed in male germ cells (at protein level).

Its subcellular location is the nucleus. The protein localises to the cytoplasm. Component of the cleavage factor Im (CFIm) complex that functions as an activator of the pre-mRNA 3'-end cleavage and polyadenylation processing required for the maturation of pre-mRNA into functional mRNAs. CFIm contributes to the recruitment of multiprotein complexes on specific sequences on the pre-mRNA 3'-end, so called cleavage and polyadenylation signals (pA signals). Most pre-mRNAs contain multiple pA signals, resulting in alternative cleavage and polyadenylation (APA) producing mRNAs with variable 3'-end formation. The CFIm complex acts as a key regulator of cleavage and polyadenylation site choice during APA through its binding to 5'-UGUA-3' elements localized in the 3'-untranslated region (UTR) for a huge number of pre-mRNAs. NUDT21/CPSF5 activates indirectly the mRNA 3'-processing machinery by recruiting CPSF6 and/or CPSF7. Binds to 5'-UGUA-3' elements localized upstream of pA signals that act as enhancers of pre-mRNA 3'-end processing. The homodimer mediates simultaneous sequence-specific recognition of two 5'-UGUA-3' elements within the pre-mRNA. Plays a role in somatic cell fate transitions and pluripotency by regulating widespread changes in gene expression through an APA-dependent function. Binds to chromatin. Binds to, but does not hydrolyze mono- and di-adenosine nucleotides. The polypeptide is Cleavage and polyadenylation specificity factor subunit 5 (Mus musculus (Mouse)).